We begin with the raw amino-acid sequence, 198 residues long: MRYPEHLLKLIHILKKFPGVGHKSAERFAFHLLNWPMEHLIELSETVKNTKDKIKQCLNCGCLTDEAACYFCDINQRDSQIICVTAFPRDVFSIEETHEYRGLYHVLGGVLSPLENRGPEHLSISRLKHRIQDLQIKEVVIALDSTLEGDATALFLKQELAADDIQISRLAFGLPMGSSLDYVDGGTLARALAGRSRF.

The C4-type zinc finger occupies 57-72 (CLNCGCLTDEAACYFC). The 96-residue stretch at 80–175 (QIICVTAFPR…QISRLAFGLP (96 aa)) folds into the Toprim domain.

Belongs to the RecR family.

May play a role in DNA repair. It seems to be involved in an RecBC-independent recombinational process of DNA repair. It may act with RecF and RecO. The chain is Recombination protein RecR from Protochlamydia amoebophila (strain UWE25).